The chain runs to 404 residues: MTMAMASMKGENVTVSAAAAPRMKKLASMLCMKGGNGDGSYLNNSQAQALHARRMLHFLEETLDAMMERSSSDKLFTAADLGCSCGSNSLFIVDVIVRRVSEAYESRGRDAPEFQVFFSDLPSNDFNTLFQLLPPLLAPVAGSLEECLAAGEGAATATRPYHAAGVPGTFYGRLFPGESIDVFTSTFSLHWLSQVPEEVGDSASPAYNGGRVFVHRATEAVAAAYKRQFQADLARFLRSRAREMKRGGAMFLACLGRSSGDPADQGGAGLLFGTHFQDAWDDLVQEGVVEGEKRDSFNIPVYAPSLQEFRDVVRADGAFAIDRLELVRGGSPLVVDRPDDAAEVGRAMANSCKAVAGVLVDAHIGERRGAQLFERLERRAARHARELVEKMHFFHVVCSLSLAP.

Residues 82-83 (GC), Asn88, Asp120, 169-171 (TFY), and 186-188 (TFS) contribute to the S-adenosyl-L-methionine site. Asn208, Val212, Arg294, Asp295, Phe297, and Asn298 together coordinate Mg(2+).

The protein belongs to the methyltransferase superfamily. SABATH family. As to quaternary structure, homodimer. The cofactor is Mg(2+). As to expression, expressed in roots and panicles.

The enzyme catalyses (indol-3-yl)acetate + S-adenosyl-L-methionine = methyl (indol-3-yl)acetate + S-adenosyl-L-homocysteine. Its function is as follows. Catalyzes the methylation of the free carboxyl end of the plant hormone indole-3-acetic acid (IAA). Converts IAA to IAA methyl ester (MeIAA). Regulates IAA activities by IAA methylation. Methylation of IAA plays an important role in regulating plant development and auxin homeostasis. MeIAA seems to be an inactive form of IAA. This Oryza sativa subsp. japonica (Rice) protein is Indole-3-acetate O-methyltransferase 1 (IAMT1).